A 330-amino-acid polypeptide reads, in one-letter code: D-lactate dehydrogenase (330 aa).

Residues 156 to 157 (RI), D176, 206 to 207 (VP), 233 to 235 (AAR), and D259 each bind NAD(+). R235 is a catalytic residue. The active site involves E264. The active-site Proton donor is the H296.

This sequence belongs to the D-isomer specific 2-hydroxyacid dehydrogenase family.

The enzyme catalyses (R)-lactate + NAD(+) = pyruvate + NADH + H(+). This is D-lactate dehydrogenase (ldhD) from Staphylococcus aureus (strain MRSA252).